The chain runs to 496 residues: Autophagy-related protein 21 (496 aa).

One copy of the WD 1 repeat lies at 1 to 35; it reads MKVLQFNQDATCCVVAASSHQISIFNCDPFGKCFE. The segment at 41-86 is disordered; it reads SKKKTSNNNGTASNSESRNNEESILITNGSRDRTDAEEEEDNEDNA. Over residues 46–57 the composition is skewed to low complexity; the sequence is SNNNGTASNSES. A compositionally biased stretch (acidic residues) spans 75–84; it reads DAEEEEDNED. One copy of the WD 2 repeat lies at 148 to 190; that stretch reads VMNRKRMCVLLESDQIFIYDISCMKPLETIDLWEDHYKRSQAN. Threonine 213 bears the Phosphothreonine mark. Serine 237 is subject to Phosphoserine. WD repeat units lie at residues 294–334, 346–385, and 448–488; these read VHKG…DYMS, TRLC…NSLP, and VNES…GECV. Residues 342 to 346 carry the L/FRRG motif motif; sequence FRRGT.

The protein belongs to the WD repeat PROPPIN family.

Its subcellular location is the cytoplasm. It is found in the vacuole membrane. Functionally, required for cytoplasm to vacuole transport (Cvt) vesicles formation and mitophagy. Involved in binding of phosphatidylethanolamine to ATG8 and in recruitment of ATG8 and ATG5 to the pre-autophagosomal structure. Protects ATG8 from ARG4-mediated cleavage. Essential for maturation of proaminopeptidase I. The protein is Autophagy-related protein 21 (ATG21) of Saccharomyces cerevisiae (strain YJM789) (Baker's yeast).